Here is an 88-residue protein sequence, read N- to C-terminus: Bombyxin B-8 (88 aa).

Residues 1 to 18 (MKTSVIFVLIVLNLMWSG) form the signal peptide. 3 cysteine pairs are disulfide-bonded: Cys28–Cys74, Cys40–Cys87, and Cys73–Cys78. The propeptide at 47-65 (GGAQYAPYFWQKAYLGSRG) is c peptide like.

It belongs to the insulin family. Heterodimer of a B chain and an A chain linked by two disulfide bonds.

The protein localises to the secreted. Its function is as follows. Brain peptide responsible for activation of prothoracic glands to produce ecdysone in insects. The sequence is that of Bombyxin B-8 (BBXB8) from Bombyx mori (Silk moth).